The sequence spans 281 residues: Large ribosomal subunit protein uL2 (281 aa).

Residues 222 to 281 are disordered; that stretch reads TVRGSAMNPNDHPHGGGEGRQPIGRKSPMTPWGKRALGVKTRATKKASNQFIIRRRKETK.

It belongs to the universal ribosomal protein uL2 family. In terms of assembly, part of the 50S ribosomal subunit. Forms a bridge to the 30S subunit in the 70S ribosome.

In terms of biological role, one of the primary rRNA binding proteins. Required for association of the 30S and 50S subunits to form the 70S ribosome, for tRNA binding and peptide bond formation. It has been suggested to have peptidyltransferase activity; this is somewhat controversial. Makes several contacts with the 16S rRNA in the 70S ribosome. This is Large ribosomal subunit protein uL2 from Metamycoplasma hominis (strain ATCC 23114 / DSM 25592 / NBRC 14850 / NCTC 10111 / PG21) (Mycoplasma hominis).